The following is a 408-amino-acid chain: FAD-dependent monooxygenase nscC (408 aa).

Positions 1–20 are cleaved as a signal peptide; that stretch reads MASRLPILIIGAGISGLTTA. Positions 34 and 45 each coordinate FAD. N-linked (GlcNAc...) asparagine glycans are attached at residues Asn-91 and Asn-103. Arg-119 contacts FAD. Asn-170 and Asn-231 each carry an N-linked (GlcNAc...) asparagine glycan. Residues Asp-328 and Gly-341 each contribute to the FAD site.

Belongs to the paxM FAD-dependent monooxygenase family. It depends on FAD as a cofactor.

The protein operates within secondary metabolite biosynthesis. FAD-dependent monooxygenase; part of the gene cluster that mediates the biosynthesis of neosartoricin, a prenylated anthracenone that exhibits T-cell antiproliferative activity, suggestive of a physiological role as an immunosuppressive agent. The non-reducing polyketide synthase nscA probably synthesizes and cyclizes the decaketide backbone. The hydrolase nscB then mediates the product release through hydrolysis followed by spontaneous decarboxylation. The prenyltransferase nscD catalyzes the addition of the dimethylallyl group to the aromatic C5. The FAD-dependent monooxygenase nscC is then responsible for the stereospecific hydroxylation at C2. There is no gene encoding O-acetyltransferase in the nsc gene cluster; thus, the last step of 2-O-acetylation leading to neosartoricin may be catalyzed by an unidentified O-acetyltransferase. The polypeptide is FAD-dependent monooxygenase nscC (Aspergillus fumigatus (strain ATCC MYA-4609 / CBS 101355 / FGSC A1100 / Af293) (Neosartorya fumigata)).